We begin with the raw amino-acid sequence, 404 residues long: WD repeat and SOCS box-containing protein 2 (404 aa).

5 WD repeats span residues 105–148 (PPSR…LLLN), 151–191 (GHQD…KQIQ), 195–234 (GHLQ…LIRK), 237–276 (GHQS…RLRS), and 291–330 (VHMS…PVAF). Positions 356–404 (HVQFWTAPRVLSSLKHLCRKALRSFLTTYQVLALPIPKKMKEFLTYRTF) constitute an SOCS box domain.

It functions in the pathway protein modification; protein ubiquitination. Its function is as follows. May be a substrate-recognition component of a SCF-like ECS (Elongin-Cullin-SOCS-box protein) E3 ubiquitin ligase complex which mediates the ubiquitination and subsequent proteasomal degradation of target proteins. The protein is WD repeat and SOCS box-containing protein 2 (Wsb2) of Mus musculus (Mouse).